The following is a 368-amino-acid chain: Histidinol-phosphate aminotransferase (368 aa).

Position 229 is an N6-(pyridoxal phosphate)lysine (lysine 229).

It belongs to the class-II pyridoxal-phosphate-dependent aminotransferase family. Histidinol-phosphate aminotransferase subfamily. Homodimer. Pyridoxal 5'-phosphate is required as a cofactor.

The catalysed reaction is L-histidinol phosphate + 2-oxoglutarate = 3-(imidazol-4-yl)-2-oxopropyl phosphate + L-glutamate. It functions in the pathway amino-acid biosynthesis; L-histidine biosynthesis; L-histidine from 5-phospho-alpha-D-ribose 1-diphosphate: step 7/9. The sequence is that of Histidinol-phosphate aminotransferase from Acidovorax ebreus (strain TPSY) (Diaphorobacter sp. (strain TPSY)).